We begin with the raw amino-acid sequence, 292 residues long: tRNA-splicing endonuclease (292 aa).

Catalysis depends on residues Y231, H238, and K267.

It belongs to the tRNA-intron endonuclease family. Archaeal long subfamily. Homodimer.

It catalyses the reaction pretRNA = a 3'-half-tRNA molecule with a 5'-OH end + a 5'-half-tRNA molecule with a 2',3'-cyclic phosphate end + an intron with a 2',3'-cyclic phosphate and a 5'-hydroxyl terminus.. In terms of biological role, endonuclease that removes tRNA introns. Cleaves pre-tRNA at the 5'- and 3'-splice sites to release the intron. The products are an intron and two tRNA half-molecules bearing 2',3' cyclic phosphate and 5'-OH termini. Recognizes a pseudosymmetric substrate in which 2 bulged loops of 3 bases are separated by a stem of 4 bp. This chain is tRNA-splicing endonuclease, found in Thermoplasma volcanium (strain ATCC 51530 / DSM 4299 / JCM 9571 / NBRC 15438 / GSS1).